We begin with the raw amino-acid sequence, 386 residues long: MVEMSTGTTNLVRTLDSMDFLKMDRRTFMKAVSALGATAFLGTYQTEIVNALEFAETKVIWIHGSECTGCSESVLNGGNPDIVQALTKLNVNLAYHETLCMQQGIWNDGELVNTSELNSEILLEDLYKEGNYILVVEGSIPNGPDGSGRYLVIGNKTFKETLGEAAKNANAIVAVGACACWGGITSADSDIEKDTDYRGVAFKKTDASKGMLKELGIDKPVINIPGCPCHPDWVLLTLGAVILGKIKIPDDLPAALDQYGRPKVFFPPDHTVHENCPRRGYYDRGEFDTEVGGEKCLWKLGCKAPYAHADCGIRRWNGSVSMCTQAGGPCINCVDPGFPDASRPLYVEAEDKGIVGANIDTIAKVAVGAAAVAAGVHAVRRMGKGE.

Residues 1-51 constitute a signal peptide (tat-type signal); sequence MVEMSTGTTNLVRTLDSMDFLKMDRRTFMKAVSALGATAFLGTYQTEIVNA. [4Fe-4S] cluster contacts are provided by Cys-67, Cys-70, Cys-178, Cys-227, His-273, Cys-276, Cys-296, and Cys-302. Residues Cys-311, Cys-330, and Cys-333 each coordinate [3Fe-4S] cluster.

Belongs to the [NiFe]/[NiFeSe] hydrogenase small subunit family. Composed of a large subunit (VhoA), a small subunit (VhoG) and a cytochrome subunit (VhoC). [4Fe-4S] cluster serves as cofactor. [3Fe-4S] cluster is required as a cofactor. Predicted to be exported by the Tat system. The position of the signal peptide cleavage has not been experimentally proven.

The protein resides in the cell membrane. The enzyme catalyses methanophenazine + H2 = dihydromethanophenazine. Functionally, part of the F420 non-reducing hydrogenase I complex that catalyzes the reduction of methanophenazine to dihydromethanophenazine. The sequence is that of F420 non-reducing hydrogenase I small subunit from Methanosarcina mazei (strain ATCC BAA-159 / DSM 3647 / Goe1 / Go1 / JCM 11833 / OCM 88) (Methanosarcina frisia).